Reading from the N-terminus, the 441-residue chain is tRNA-2-methylthio-N(6)-dimethylallyladenosine synthase (441 aa).

Positions 5-121 constitute an MTTase N-terminal domain; the sequence is KKLFIKTYGC…LPQMEARLRE (117 aa). [4Fe-4S] cluster contacts are provided by cysteine 14, cysteine 50, cysteine 84, cysteine 159, cysteine 163, and cysteine 166. One can recognise a Radical SAM core domain in the interval 145–380; that stretch reads ARRAPSAFLT…TRQQQDIQQS (236 aa). The region spanning 379–441 is the TRAM domain; it reads QSMVGRDVSV…RNSLAAVTLA (63 aa).

Belongs to the methylthiotransferase family. MiaB subfamily. Monomer. [4Fe-4S] cluster is required as a cofactor.

It localises to the cytoplasm. It carries out the reaction N(6)-dimethylallyladenosine(37) in tRNA + (sulfur carrier)-SH + AH2 + 2 S-adenosyl-L-methionine = 2-methylsulfanyl-N(6)-dimethylallyladenosine(37) in tRNA + (sulfur carrier)-H + 5'-deoxyadenosine + L-methionine + A + S-adenosyl-L-homocysteine + 2 H(+). Its function is as follows. Catalyzes the methylthiolation of N6-(dimethylallyl)adenosine (i(6)A), leading to the formation of 2-methylthio-N6-(dimethylallyl)adenosine (ms(2)i(6)A) at position 37 in tRNAs that read codons beginning with uridine. The chain is tRNA-2-methylthio-N(6)-dimethylallyladenosine synthase from Roseobacter denitrificans (strain ATCC 33942 / OCh 114) (Erythrobacter sp. (strain OCh 114)).